We begin with the raw amino-acid sequence, 439 residues long: Adenylosuccinate synthetase (439 aa).

GTP-binding positions include 25-31, 53-55, and K62; these read GDEGKGK and GHT. D26 acts as the Proton acceptor in catalysis. Positions 26 and 53 each coordinate Mg(2+). Residues 26–29 and 51–54 each bind IMP; these read DEGK and NAGH. The active-site Proton donor is the H54. IMP contacts are provided by T141, R155, N232, and T247. T307 provides a ligand contact to GTP. 307–313 lines the substrate pocket; that stretch reads TTTKRPR. R311 is an IMP binding site. GTP is bound by residues R313, 339-341, and 425-427; these read KLD and GVG.

Belongs to the adenylosuccinate synthetase family. As to quaternary structure, homodimer. Mg(2+) is required as a cofactor.

It localises to the cytoplasm. It carries out the reaction IMP + L-aspartate + GTP = N(6)-(1,2-dicarboxyethyl)-AMP + GDP + phosphate + 2 H(+). It functions in the pathway purine metabolism; AMP biosynthesis via de novo pathway; AMP from IMP: step 1/2. In terms of biological role, plays an important role in the salvage pathway for purine nucleotide biosynthesis. Catalyzes the first commited step in the biosynthesis of AMP from IMP. In Plasmodium berghei (strain Anka), this protein is Adenylosuccinate synthetase (ADSS).